A 900-amino-acid polypeptide reads, in one-letter code: Xylanolytic transcriptional activator xlnR (900 aa).

Polar residues predominate over residues 53-71 (SREGGNSENNSTFKPSSVR). The disordered stretch occupies residues 53–75 (SREGGNSENNSTFKPSSVRDSLA). The segment at residues 98 to 124 (CDQCNQLRTKCDGQNPCAHCIEFGLTC) is a DNA-binding region (zn(2)-C6 fungal-type). 3 disordered regions span residues 137 to 169 (SKKDIAAAAAAAGHQGGMGNRSPTDRRLSQEPG), 520 to 559 (ELPPNASQPGQDGERENEGDNPSKRNQSLHGGNSNVNVTE), and 701 to 722 (EPPENPHIDHLSPSGRSSSTVG). Basic and acidic residues predominate over residues 531–542 (DGERENEGDNPS). Polar residues predominate over residues 543–557 (KRNQSLHGGNSNVNV). The span at 712–722 (SPSGRSSSTVG) shows a compositional bias: low complexity.

Belongs to the xlnR/xlr1 family.

It is found in the nucleus. In terms of biological role, transcriptional activator of the xylanolytic system. Involved in the regulation of extracellular cellulolytic and xylanolytic genes and in the regulation of the intracellular activities of D-xylose catabolic genes in the pentose catabolic pathway (PCP) in response to the presence of D-xylose. Binds to the DNA sequence 5'-GGNTAAA-3'. In Emericella nidulans (strain FGSC A4 / ATCC 38163 / CBS 112.46 / NRRL 194 / M139) (Aspergillus nidulans), this protein is Xylanolytic transcriptional activator xlnR (xlnR).